Here is a 166-residue protein sequence, read N- to C-terminus: MSNIEKQVGELQEKLIAVNRVSKTVKGGRIMSFTALTVVGDGNGRVGFGYGKAREVPAAIQKAMEKARRNMINVALNEGTLQHPVKGVHTGSRVFMQPASEGTGIIAGGAMRAVLEVAGVRNVLSKAYGSTNPINVVRATIDALANMKSPEMVAAKRGKTVDEILG.

The S5 DRBM domain maps to 11–74 (LQEKLIAVNR…EKARRNMINV (64 aa)).

Belongs to the universal ribosomal protein uS5 family. As to quaternary structure, part of the 30S ribosomal subunit. Contacts proteins S4 and S8.

Its function is as follows. With S4 and S12 plays an important role in translational accuracy. In terms of biological role, located at the back of the 30S subunit body where it stabilizes the conformation of the head with respect to the body. The chain is Small ribosomal subunit protein uS5 from Haemophilus influenzae (strain 86-028NP).